We begin with the raw amino-acid sequence, 241 residues long: Uridylate kinase (241 aa).

12–15 (KISG) is an ATP binding site. Residues 20–25 (GDKGNG) are involved in allosteric activation by GTP. G54 contacts UMP. 2 residues coordinate ATP: G55 and R59. UMP contacts are provided by residues D74 and 135-142 (TGNPYFST). ATP-binding residues include N163, Y169, and D172.

It belongs to the UMP kinase family. In terms of assembly, homohexamer.

It localises to the cytoplasm. It carries out the reaction UMP + ATP = UDP + ADP. The protein operates within pyrimidine metabolism; CTP biosynthesis via de novo pathway; UDP from UMP (UMPK route): step 1/1. Its activity is regulated as follows. Allosterically activated by GTP. Inhibited by UTP. In terms of biological role, catalyzes the reversible phosphorylation of UMP to UDP. This chain is Uridylate kinase, found in Lactobacillus helveticus (strain DPC 4571).